The following is a 507-amino-acid chain: uncharacterized protein (507 aa).

14 consecutive transmembrane segments (helical) span residues 8 to 28, 41 to 61, 86 to 106, 130 to 150, 171 to 191, 193 to 213, 235 to 255, 275 to 295, 323 to 343, 355 to 375, 387 to 407, 408 to 428, 444 to 464, and 467 to 487; these read VKGVSWHLLSYFLAAPIAYLV, VGLFYAVLDFFSMLVVFRAFG, IVFVGILQTILAFIVAFLVVI, INILIIMAMGYYFLDSIVAFF, ILSVFIFSLIFIYLFNVHNAY, PSVSYLLMAVVMIIIYGYIVV, LFSYGMYVMIGYAGSLILGYL, VAMPTVNILSYFAFSVGAVLF, IIVTPLAILMAYFPTVIINIL, IQILSFGAMFLTFNSIGFNIL, ILYIGASFNLIFNILLIPKFG, IIGAAITTVFGYFIMWIFQIW, ILVILVGIFSLIPVMFIKDLI, and VILQLFVCGVVYFGIYILGIF.

It belongs to the polysaccharide synthase family.

It is found in the cell membrane. This is an uncharacterized protein from Methanocaldococcus jannaschii (strain ATCC 43067 / DSM 2661 / JAL-1 / JCM 10045 / NBRC 100440) (Methanococcus jannaschii).